A 666-amino-acid polypeptide reads, in one-letter code: Transketolase (666 aa).

H26 lines the substrate pocket. Thiamine diphosphate-binding positions include H66 and G114 to L116. Residue D155 participates in Mg(2+) binding. 2 residues coordinate thiamine diphosphate: G156 and N185. 2 residues coordinate Mg(2+): N185 and I187. Substrate-binding residues include H261, R358, and S385. H261 serves as a coordination point for thiamine diphosphate. E411 acts as the Proton donor in catalysis. F437 is a thiamine diphosphate binding site. Substrate-binding residues include H461, D469, and R520.

This sequence belongs to the transketolase family. Homodimer. Requires Mg(2+) as cofactor. Ca(2+) serves as cofactor. The cofactor is Mn(2+). Co(2+) is required as a cofactor. It depends on thiamine diphosphate as a cofactor.

It carries out the reaction D-sedoheptulose 7-phosphate + D-glyceraldehyde 3-phosphate = aldehydo-D-ribose 5-phosphate + D-xylulose 5-phosphate. Catalyzes the transfer of a two-carbon ketol group from a ketose donor to an aldose acceptor, via a covalent intermediate with the cofactor thiamine pyrophosphate. In Buchnera aphidicola subsp. Baizongia pistaciae (strain Bp), this protein is Transketolase (tkt).